A 188-amino-acid chain; its full sequence is Putative manganese efflux pump MntP (188 aa).

6 helical membrane-spanning segments follow: residues 3-23 (ITAT…ASIG), 41-61 (LIFG…GMLA), 66-86 (LEWN…RMII), 107-129 (LLVT…LAFL), 143-163 (ATLI…PLLG), and 168-188 (ILGG…HFHG).

It belongs to the MntP (TC 9.B.29) family.

It localises to the cell inner membrane. Its function is as follows. Probably functions as a manganese efflux pump. This Citrobacter koseri (strain ATCC BAA-895 / CDC 4225-83 / SGSC4696) protein is Putative manganese efflux pump MntP.